The primary structure comprises 149 residues: Endoribonuclease YbeY (149 aa).

Residues His106, His110, and His116 each contribute to the Zn(2+) site.

The protein belongs to the endoribonuclease YbeY family. It depends on Zn(2+) as a cofactor.

The protein resides in the cytoplasm. Single strand-specific metallo-endoribonuclease involved in late-stage 70S ribosome quality control and in maturation of the 3' terminus of the 16S rRNA. The sequence is that of Endoribonuclease YbeY from Methylobacillus flagellatus (strain ATCC 51484 / DSM 6875 / VKM B-1610 / KT).